Reading from the N-terminus, the 129-residue chain is Succinate dehydrogenase subunit 3-2, mitochondrial (129 aa).

Residues 1–58 constitute a mitochondrion transit peptide; it reads MEKYQSKARFAPLSDAPFALRGALGSSNSSFNNIDHLRQSSSSGQARSYTSSPLGALR. The span at 27 to 53 shows a compositional bias: polar residues; that stretch reads SNSSFNNIDHLRQSSSSGQARSYTSSP. The disordered stretch occupies residues 27–66; that stretch reads SNSSFNNIDHLRQSSSSGQARSYTSSPLGALRPKMFPSGN. Histidine 87 provides a ligand contact to heme. The helical transmembrane segment at 105–127 threads the bilayer; sequence IFGAALGAVIISIPLATKFSLMF.

Component of complex II composed of eight subunits in plants: four classical SDH subunits SDH1, SDH2, SDH3 and SDH4 (a flavoprotein (FP), an iron-sulfur protein (IP), and a cytochrome b composed of a large and a small subunit.), as well as four subunits unknown in mitochondria from bacteria and heterotrophic eukaryotes. Heme serves as cofactor.

The protein resides in the mitochondrion inner membrane. It functions in the pathway carbohydrate metabolism; tricarboxylic acid cycle. Functionally, membrane-anchoring subunit of succinate dehydrogenase (SDH). This Oryza sativa subsp. japonica (Rice) protein is Succinate dehydrogenase subunit 3-2, mitochondrial.